A 99-amino-acid polypeptide reads, in one-letter code: Small ribosomal subunit protein eS24 (99 aa).

The protein belongs to the eukaryotic ribosomal protein eS24 family. As to quaternary structure, may be present in 2 copies per 70S ribosome. Part of the 30S ribosomal subunit, where it binds 16S rRNA at its canonical site at the bse of the body, as well as a possible second 50S binding site near 23S rRNA helix 45.

This Pyrococcus furiosus (strain ATCC 43587 / DSM 3638 / JCM 8422 / Vc1) protein is Small ribosomal subunit protein eS24.